Reading from the N-terminus, the 464-residue chain is CRISPR system endoribonuclease Csm6 (464 aa).

Residues 1 to 190 (MEDLDALWER…LRILPNPHEA (190 aa)) form a CARF domain region. The interval 191 to 464 (LAEVDALFAK…LSPEPVPLGF (274 aa)) is HEPN domain.

Belongs to the CRISPR-associated Csm6 family. In terms of assembly, homodimer. The protein forms a twisted, head-to-head dimer; the composite ssRNase active site is formed at the dimer interface. It depends on Does not require a metal cofactor. as a cofactor.

Non-specific ssRNase activity is allosterically activated about 1000-fold by cyclic tetraadenylate (cA4), which probably binds to its CARF domain. Functionally, CRISPR (clustered regularly interspaced short palindromic repeat) is an adaptive immune system that provides protection against mobile genetic elements (viruses, transposable elements and conjugative plasmids). CRISPR clusters contain spacers, sequences complementary to antecedent mobile elements, and target invading nucleic acids. CRISPR clusters are transcribed and processed into CRISPR RNA (crRNA). The type III-A Csm effector complex binds crRNA and acts as a crRNA-guided RNase, DNase and cyclic oligoadenylate synthase; binding of target RNA cognate to the crRNA is required for all activities. This protein is not part of the Csm effector complex. A single-strand-specific endoribonuclease (ssRNase) producing free 5'-OH. Activity is approximately 1000-fold stimulated by cyclic oligoadenylate (cOA); only cyclic tetraadenylate (cA4) stimulates the ssRNase activity while linear oligoadenylates do not activate the RNase. Another study showed stimulation by linear tetraadenylate at very high concentrations, but did not examine stimulation by cA4. This is CRISPR system endoribonuclease Csm6 from Thermus thermophilus (strain ATCC 27634 / DSM 579 / HB8).